A 175-amino-acid polypeptide reads, in one-letter code: Alpha-crystallin B chain (175 aa).

Residue Met-1 is modified to N-acetylmethionine. Position 19 is a phosphoserine (Ser-19). Ser-41 carries O-linked (GlcNAc) serine glycosylation. Phosphoserine occurs at positions 45 and 59. One can recognise a sHSP domain in the interval 56 to 164 (RAPSWIDTGL…PERTIPITRE (109 aa)). His-83 contributes to the Zn(2+) binding site. Lys-92 is subject to N6-acetyllysine. Zn(2+) contacts are provided by His-104, Glu-106, His-111, and His-119. The interval 142–175 (VLTVNGPRKQASGPERTIPITREEKPAVTAAPKK) is disordered. N6-acetyllysine is present on Lys-166. Thr-170 carries O-linked (GlcNAc) threonine glycosylation.

Belongs to the small heat shock protein (HSP20) family. Heteromer composed of three CRYAA and one CRYAB subunits. Aggregates with homologous proteins, including the small heat shock protein HSPB1, to form large heteromeric complexes. Inter-subunit bridging via zinc ions enhances stability, which is crucial as there is no protein turn over in the lens. Interacts with HSPBAP1 and TTN/titin. Interacts with TMEM109; in the cellular response to DNA damage. Interacts with DES; binds rapidly during early stages of DES filament assembly and a reduced binding seen in the later stages. Interacts with ATP6V1A and with MTOR, forming a ternary complex. As to expression, lens as well as other tissues.

Its subcellular location is the cytoplasm. The protein resides in the nucleus. It is found in the secreted. It localises to the lysosome. Its function is as follows. May contribute to the transparency and refractive index of the lens. Has chaperone-like activity, preventing aggregation of various proteins under a wide range of stress conditions. In lens epithelial cells, stabilizes the ATP6V1A protein, preventing its degradation by the proteasome. This Spalax judaei (Judean Mountains blind mole rat) protein is Alpha-crystallin B chain (CRYAB).